The primary structure comprises 279 residues: Phycobilisome 34.5 kDa linker polypeptide, phycoerythrocyanin-associated, rod (279 aa).

One can recognise a PBS-linker domain in the interval 2–178; sequence STSVAERLAI…LYRGRANSDN (177 aa). Residues 226-278 enclose the CpcD-like domain; it reads ARMFIVEAIAGTLNTNVAVRRSRQVYTVPYDRLSATYQEIHKRGGKIVKITPA.

It belongs to the phycobilisome linker protein family.

It is found in the cellular thylakoid membrane. Rod linker protein, associated with phycoerythrocyanin. Linker polypeptides determine the state of aggregation and the location of the disk-shaped phycobiliprotein units within the phycobilisome and modulate their spectroscopic properties in order to mediate a directed and optimal energy transfer. The chain is Phycobilisome 34.5 kDa linker polypeptide, phycoerythrocyanin-associated, rod (pecC) from Mastigocladus laminosus (Fischerella sp.).